Consider the following 271-residue polypeptide: uncharacterized protein (271 aa).

Positions 233-261 (VEPDPNRFSEPVDQPTLVEEGKEARRTER) are disordered. Over residues 251-261 (EEGKEARRTER) the composition is skewed to basic and acidic residues.

In terms of biological role, may be involved in swimming motility. This is an uncharacterized protein from Haloferax volcanii (strain ATCC 29605 / DSM 3757 / JCM 8879 / NBRC 14742 / NCIMB 2012 / VKM B-1768 / DS2) (Halobacterium volcanii).